The chain runs to 1033 residues: MSEESFDDTNKAFENEKDIILEKIVKDENNLNNCSNMINMDDVENMKKELYVLHKKDEEIENNVDCFSGDKYNVENVINLKKKKKKDEDTDSSYYKTTLDEVYDTSDISTDEMLSNYSSSEDNNNIEMNIINDFYLKDDNTYCLEWNSDIINVLSEEIKEKEKLLEDENKDICNMKSRFLKLEKYVNIKKKKIINIKKNIEEKRKIEFDEKEIFKCLQIKNDFLKKENKKIELEREKNNKKIIETQNNITTCQKNIDDIKKELILKENELNDFINKIKIIQQEEYEIEKIKLSKDKEIQNVSYNLEKYNNEKIQQDKKYEQVKMNNMKFDIELKSIIQEYYDIKKDIKNISNKYICIMDMIKCRDKTIYKFEKDYTKTIHKEKQLQNKCLHKQNLINTQKDKNIILNNQIKKIQFDINKIRKELNDKQMSYDKTIIDRDHLNKEYEYEIVEIKEKLQEEKKSLENTLQHLNETYITMSTNYEESKNEYEKEQVNNIEKNDLIKSSEQILVQLQNKLQKLLDEIKSLDLEKFQLTQTLQVIKNDYITLEADVLGTQIKIKQIKSNIKKTEKELERQKEMLYKFDFQTQVLTKKINMISGISTFEKKKENQKKIILLEKELYKNEDIYNTLNNEMKRINIEIKNIKLYQNELQEQKMNYKNLYEKLQLEIKSLESTINNEIKEKENIMLIELNLKIELDKLKSTFSKHVDNLNICKKEKKENMNNAKLSEQDINAHMESLKVIIKNINDEIHKLNIQLYEKKNKSNNLQLKLNSIIICNQKNKDQKDICPNENQHIYYKMKIDQDIINLKEQLKKINEQIDKENIETKNFQRTLDDIIQTNKEFNDNIKSIDPQYKILLKKKNKLNKKWEQINDHINNLETNINDYNKKIKEGDSQLNNIQLQCENIEQKINKIKESNLKVENNINDLFIKIERASNQLKKNLAPTTNMMKLKNKQIKDDENNLSNNNNNNNNNNNNINVNVNVNCEPVPLEKHIFKQIQMESLKEKLSLLMECFKNNIDNVIMKEVFNLIETAE.

Coiled coils occupy residues 212–326 (EIFK…KMNN), 405–582 (ILNN…LYKF), 615–771 (LEKE…LKLN), and 797–1019 (KMKI…NIDN).

This is an uncharacterized protein from Plasmodium falciparum (isolate 3D7).